Reading from the N-terminus, the 209-residue chain is Germin-like protein (209 aa).

Positions 1-18 (MIVPIFFLFSLLFSSSHG) are cleaved as a signal peptide. A disulfide bridge connects residues Cys24 and Cys39. The region spanning 53-199 (SGLGITGNTT…ASFLDPAEIK (147 aa)) is the Cupin type-1 domain. An N-linked (GlcNAc...) asparagine glycan is attached at Asn60. The Mn(2+) site is built by His101, His103, Glu108, and His147.

The protein localises to the secreted. It localises to the extracellular space. Its subcellular location is the apoplast. Has antibacterial activity against B.subtilis (MIC=5 ug), B.cereus (MIC=50 ug), A.hydrophila (MIC=2.5 ug), S.marcescens(MIC=10 ug), S.enterica (MIC=10 ug), P.entomophila (MIC=2.5 ug) and P.rhodesiae (MIC=10 ug). Has antifungal activity against F.solani KACC 40384 and F.oxysporum KACC 40032. Probably has no oxalate oxidase activity even if the active site is conserved. This is Germin-like protein from Morus alba (White mulberry).